A 101-amino-acid chain; its full sequence is NADH-quinone oxidoreductase subunit K (101 aa).

The next 3 helical transmembrane spans lie at 4-24, 30-50, and 61-81; these read LTHY…GIFL, IVLL…FIAF, and IFVF…LAIL.

Belongs to the complex I subunit 4L family. As to quaternary structure, NDH-1 is composed of 14 different subunits. Subunits NuoA, H, J, K, L, M, N constitute the membrane sector of the complex.

The protein resides in the cell inner membrane. It catalyses the reaction a quinone + NADH + 5 H(+)(in) = a quinol + NAD(+) + 4 H(+)(out). In terms of biological role, NDH-1 shuttles electrons from NADH, via FMN and iron-sulfur (Fe-S) centers, to quinones in the respiratory chain. The immediate electron acceptor for the enzyme in this species is believed to be ubiquinone. Couples the redox reaction to proton translocation (for every two electrons transferred, four hydrogen ions are translocated across the cytoplasmic membrane), and thus conserves the redox energy in a proton gradient. The protein is NADH-quinone oxidoreductase subunit K of Laribacter hongkongensis (strain HLHK9).